Reading from the N-terminus, the 81-residue chain is U12-hexatoxin-Mg1a (81 aa).

Positions 1 to 24 are cleaved as a signal peptide; it reads MKAPATIVILIMSLISVLWATADT. A propeptide spanning residues 25 to 50 is cleaved from the precursor; sequence EDGNLLFPIEDFIRKFDEYPVQPKER. Disulfide bonds link C52/C66, C59/C71, and C65/C75. A Proline amide modification is found at P78.

Expressed by the venom gland.

The protein localises to the secreted. In terms of biological role, blocks voltage-gated sodium channels (Nav). Intracranial injection into mice causes lacrimation, slow breathing and death. Intrathorax injection into crickets causes death. The polypeptide is U12-hexatoxin-Mg1a (Macrothele gigas (Japanese funnel web spider)).